The primary structure comprises 183 residues: Tumor necrosis factor ligand superfamily member 4 (183 aa).

Topologically, residues 1–23 are cytoplasmic; the sequence is MERVQPLEENVGNAARPRFERNK. Residues 24-50 traverse the membrane as a helical; Signal-anchor for type II membrane protein segment; sequence LLLVASVIQGLGLLLCFTYICLHFSAL. Positions 51–173 constitute a THD domain; that stretch reads QVSHRYPRIQ…HVNGGELILI (123 aa). Residues 51 to 183 are Extracellular-facing; it reads QVSHRYPRIQ…HQNPGEFCVL (133 aa). Asn-90, Asn-114, Asn-152, and Asn-157 each carry an N-linked (GlcNAc...) asparagine glycan. Cys-97 and Cys-181 are joined by a disulfide.

The protein belongs to the tumor necrosis factor family. In terms of assembly, homotrimer.

The protein localises to the membrane. In terms of biological role, cytokine that binds to TNFRSF4. Co-stimulates T-cell proliferation and cytokine production. The chain is Tumor necrosis factor ligand superfamily member 4 (TNFSF4) from Homo sapiens (Human).